A 229-amino-acid chain; its full sequence is MSEKENNFPPLPKFIPVKPCFYQNFSDEIPVEHQVLVKRIYRLWMFYCATLGVNLIACLAWWIGGGSGTNFGLAFVWLLLFTPCGYVCWFRPVYKAFRADSSFNFMAFFFIFGAQFVLTVIQAIGFSGWGACGWLSAIGFFQYSPGAAVVMLLPAIMFSVSAAMMAIAIMKVHRIYRGAGGSFQKAQTEWNTGTWRNPPSREAQYNNFSGNSLPEYPTVPSYPGSGQWP.

At 1–39 (MSEKENNFPPLPKFIPVKPCFYQNFSDEIPVEHQVLVKR) the chain is on the cytoplasmic side. Helical transmembrane passes span 40–60 (IYRLWMFYCATLGVNLIACLA), 61–81 (WWIGGGSGTNFGLAFVWLLLF), 105–125 (FMAFFFIFGAQFVLTVIQAIG), and 149–169 (VVMLLPAIMFSVSAAMMAIAI). The Cytoplasmic portion of the chain corresponds to 170–229 (MKVHRIYRGAGGSFQKAQTEWNTGTWRNPPSREAQYNNFSGNSLPEYPTVPSYPGSGQWP). At Thr-194 the chain carries Phosphothreonine. Positions 208 to 229 (FSGNSLPEYPTVPSYPGSGQWP) are disordered.

Belongs to the SCAMP family.

The protein resides in the membrane. Its function is as follows. Probably involved in membrane protein trafficking. This chain is Secretory carrier-associated membrane protein 4 (SCAMP4), found in Homo sapiens (Human).